The primary structure comprises 215 residues: Nascent polypeptide-associated complex subunit alpha (215 aa).

Residues 1-82 (MPGEATETVP…EKKARKAMSK (82 aa)) form a disordered region. The span at 9–28 (VPVTEQEMQQPQAETGSGTE) shows a compositional bias: polar residues. Positions 29-42 (SDSDESVPDLEEGD) are enriched in acidic residues. The span at 44–57 (AQTQTQQAQLAAAA) shows a compositional bias: low complexity. Residues 70–135 (SRSEKKARKA…AKIEDLSQQA (66 aa)) enclose the NAC-A/B domain. The residue at position 166 (S166) is a Phosphoserine. One can recognise a UBA domain in the interval 176–213 (VEVKDIELVMSQANVSRAKAVRALKNNNNDIVNAIMEL).

Belongs to the NAC-alpha family.

In terms of biological role, may promote appropriate targeting of ribosome-nascent polypeptide complexes. The sequence is that of Nascent polypeptide-associated complex subunit alpha (naca) from Danio rerio (Zebrafish).